The following is a 118-amino-acid chain: uncharacterized protein (118 aa).

Residues 21–38 form a helical membrane-spanning segment; that stretch reads IVYFFFFFGLETFFSIIN.

It is found in the membrane. This is an uncharacterized protein from Dictyostelium discoideum (Social amoeba).